The following is a 392-amino-acid chain: Tryptophan synthase beta chain 1 (392 aa).

Position 85 is an N6-(pyridoxal phosphate)lysine (lysine 85).

The protein belongs to the TrpB family. Tetramer of two alpha and two beta chains. The cofactor is pyridoxal 5'-phosphate.

It catalyses the reaction (1S,2R)-1-C-(indol-3-yl)glycerol 3-phosphate + L-serine = D-glyceraldehyde 3-phosphate + L-tryptophan + H2O. It functions in the pathway amino-acid biosynthesis; L-tryptophan biosynthesis; L-tryptophan from chorismate: step 5/5. The beta subunit is responsible for the synthesis of L-tryptophan from indole and L-serine. The protein is Tryptophan synthase beta chain 1 (trpB1) of Methanothermobacter thermautotrophicus (strain ATCC 29096 / DSM 1053 / JCM 10044 / NBRC 100330 / Delta H) (Methanobacterium thermoautotrophicum).